Here is a 66-residue protein sequence, read N- to C-terminus: Hirudin-PA (66 aa).

The tract at residues 1-3 (ITY) is interaction with thrombin active site. 3 disulfide bridges follow: Cys-6–Cys-14, Cys-16–Cys-28, and Cys-22–Cys-39. The segment at 39–66 (CVTGEGTPKPQSHNQGDFEPIPEDAYDE) is disordered. Thr-45 carries an O-linked (GalNAc...) threonine glycan. Residues 55–66 (DFEPIPEDAYDE) are interaction with fibrinogen-binding exosite of thrombin. The residue at position 64 (Tyr-64) is a Sulfotyrosine.

This sequence belongs to the protease inhibitor I14 (hirudin) family.

It is found in the secreted. Its function is as follows. Hirudin is a potent thrombin-specific protease inhibitor. It forms a stable non-covalent complex with alpha-thrombin, thereby abolishing its ability to cleave fibrinogen. The sequence is that of Hirudin-PA from Hirudo medicinalis (Medicinal leech).